The sequence spans 408 residues: Succinylornithine transaminase (408 aa).

Lys252 carries the post-translational modification N6-(pyridoxal phosphate)lysine.

The protein belongs to the class-III pyridoxal-phosphate-dependent aminotransferase family. AstC subfamily. It depends on pyridoxal 5'-phosphate as a cofactor.

It catalyses the reaction N(2)-succinyl-L-ornithine + 2-oxoglutarate = N-succinyl-L-glutamate 5-semialdehyde + L-glutamate. It participates in amino-acid degradation; L-arginine degradation via AST pathway; L-glutamate and succinate from L-arginine: step 3/5. Functionally, catalyzes the transamination of N(2)-succinylornithine and alpha-ketoglutarate into N(2)-succinylglutamate semialdehyde and glutamate. Can also act as an acetylornithine aminotransferase. The sequence is that of Succinylornithine transaminase from Salmonella dublin (strain CT_02021853).